The sequence spans 489 residues: Membrane-bound lytic murein transglycosylase F (489 aa).

An N-terminal signal peptide occupies residues 1–32 (MFALTAYRLRCAAWLLATGIFLLLAGCSEAKA). Residues 33–268 (PTALERVQKE…RLKDRYYGHV (236 aa)) form a non-LT domain region. Residues 269 to 489 (DVLGYVGAYT…PEEDSGDEKL (221 aa)) form an LT domain region. The active site involves Glu-315. A disordered region spans residues 466-489 (AESGLHLPGVNKTRPEEDSGDEKL). The span at 478-489 (TRPEEDSGDEKL) shows a compositional bias: basic and acidic residues.

The protein in the N-terminal section; belongs to the bacterial solute-binding protein 3 family. It in the C-terminal section; belongs to the transglycosylase Slt family.

It is found in the cell outer membrane. The enzyme catalyses Exolytic cleavage of the (1-&gt;4)-beta-glycosidic linkage between N-acetylmuramic acid (MurNAc) and N-acetylglucosamine (GlcNAc) residues in peptidoglycan, from either the reducing or the non-reducing ends of the peptidoglycan chains, with concomitant formation of a 1,6-anhydrobond in the MurNAc residue.. In terms of biological role, murein-degrading enzyme that degrades murein glycan strands and insoluble, high-molecular weight murein sacculi, with the concomitant formation of a 1,6-anhydromuramoyl product. Lytic transglycosylases (LTs) play an integral role in the metabolism of the peptidoglycan (PG) sacculus. Their lytic action creates space within the PG sacculus to allow for its expansion as well as for the insertion of various structures such as secretion systems and flagella. This is Membrane-bound lytic murein transglycosylase F from Pseudomonas aeruginosa (strain UCBPP-PA14).